Here is a 335-residue protein sequence, read N- to C-terminus: N-acetyl-gamma-glutamyl-phosphate reductase (335 aa).

The active site involves Cys156.

Belongs to the NAGSA dehydrogenase family. Type 1 subfamily.

Its subcellular location is the cytoplasm. It carries out the reaction N-acetyl-L-glutamate 5-semialdehyde + phosphate + NADP(+) = N-acetyl-L-glutamyl 5-phosphate + NADPH + H(+). Its pathway is amino-acid biosynthesis; L-arginine biosynthesis; N(2)-acetyl-L-ornithine from L-glutamate: step 3/4. In terms of biological role, catalyzes the NADPH-dependent reduction of N-acetyl-5-glutamyl phosphate to yield N-acetyl-L-glutamate 5-semialdehyde. In Aeromonas hydrophila subsp. hydrophila (strain ATCC 7966 / DSM 30187 / BCRC 13018 / CCUG 14551 / JCM 1027 / KCTC 2358 / NCIMB 9240 / NCTC 8049), this protein is N-acetyl-gamma-glutamyl-phosphate reductase.